Here is an 820-residue protein sequence, read N- to C-terminus: DNA mismatch repair protein MutS (820 aa).

618-625 (GPNMAGKS) contacts ATP.

The protein belongs to the DNA mismatch repair MutS family.

Functionally, this protein is involved in the repair of mismatches in DNA. It is possible that it carries out the mismatch recognition step. This protein has a weak ATPase activity. The sequence is that of DNA mismatch repair protein MutS from Chlamydia trachomatis serovar L2b (strain UCH-1/proctitis).